The chain runs to 198 residues: Recombination protein RecR (198 aa).

The segment at 57 to 72 adopts a C4-type zinc-finger fold; sequence CSVCGHITDRDPCYIC. One can recognise a Toprim domain in the interval 80–175; the sequence is SVVCVVQEPK…KVTRIAHGLP (96 aa).

Belongs to the RecR family.

In terms of biological role, may play a role in DNA repair. It seems to be involved in an RecBC-independent recombinational process of DNA repair. It may act with RecF and RecO. This Bacillus thuringiensis (strain Al Hakam) protein is Recombination protein RecR.